The chain runs to 548 residues: Non-structural protein NS1 (548 aa).

Belongs to the orbivirus non-structural protein NS1 family.

This chain is Non-structural protein NS1 (Segment-5), found in Camelus dromedarius (Dromedary).